The sequence spans 259 residues: Adenosylcobinamide-GDP ribazoletransferase (259 aa).

6 consecutive transmembrane segments (helical) span residues 27–47 (ITFLPLVVTVGALIGDSILYI), 51–71 (FSHLIASFLSISSIIIYNGLN), 100–120 (VGAGGIFAVIFVYGIAVLSLA), 124–144 (LYIGLVGILIGQVVSGSSMMI), 175–195 (FLAIPIIVSFIFSPLYVVIVA), and 219–239 (VIGFLGEFSRSLFIFMLIIIA).

Belongs to the CobS family. Requires Mg(2+) as cofactor.

It is found in the cell membrane. It catalyses the reaction alpha-ribazole + adenosylcob(III)inamide-GDP = adenosylcob(III)alamin + GMP + H(+). The catalysed reaction is alpha-ribazole 5'-phosphate + adenosylcob(III)inamide-GDP = adenosylcob(III)alamin 5'-phosphate + GMP + H(+). Its pathway is cofactor biosynthesis; adenosylcobalamin biosynthesis; adenosylcobalamin from cob(II)yrinate a,c-diamide: step 7/7. In terms of biological role, joins adenosylcobinamide-GDP and alpha-ribazole to generate adenosylcobalamin (Ado-cobalamin). Also synthesizes adenosylcobalamin 5'-phosphate from adenosylcobinamide-GDP and alpha-ribazole 5'-phosphate. In Thermoplasma volcanium (strain ATCC 51530 / DSM 4299 / JCM 9571 / NBRC 15438 / GSS1), this protein is Adenosylcobinamide-GDP ribazoletransferase.